A 130-amino-acid chain; its full sequence is Arsenate reductase 2.2 (130 aa).

A Rhodanese domain is found at 18–119 (RDPRIAVVDV…WELSGRPVCR (102 aa)). Catalysis depends on Cys70, which acts as the Cysteine persulfide intermediate.

The catalysed reaction is [glutaredoxin]-dithiol + arsenate + glutathione + H(+) = glutathionyl-S-S-[glutaredoxin] + arsenite + H2O. In terms of biological role, possesses arsenate reductase activity in vitro. Catalyzes the reduction of arsenate [As(V)] to arsenite [As(III)]. May play a role in arsenic retention in roots. Its function is as follows. Possesses phosphatase activity towards p-nitrophenyl phosphate in vitro. The polypeptide is Arsenate reductase 2.2 (ACR2.2) (Oryza sativa subsp. japonica (Rice)).